The chain runs to 616 residues: Pentatricopeptide repeat-containing protein At4g15720 (616 aa).

PPR repeat units lie at residues D63–P93, N94–P128, N130–R164, N165–V199, V200–A228, N235–S269, N270–H300, S301–P335, N336–P371, and D372–G402. Residues L409 to K484 are type E motif. The interval D485–K515 is type E(+) motif. The interval S522 to W616 is type DYW motif.

Belongs to the PPR family. PCMP-H subfamily.

In Arabidopsis thaliana (Mouse-ear cress), this protein is Pentatricopeptide repeat-containing protein At4g15720 (PCMP-H1).